Here is a 123-residue protein sequence, read N- to C-terminus: Potassium voltage-gated channel subfamily E member 2 (123 aa).

N-linked (GlcNAc...) asparagine glycosylation is found at N6 and N29. A helical membrane pass occupies residues 49–69 (VILYLMVMIGMFAFIVVAILV). The Cytoplasmic portion of the chain corresponds to 70 to 123 (STVKSKRREHSQDPYHQYIVEDWQQKYRSQILHLEDSKATIHENLGATGFTVSP).

It belongs to the potassium channel KCNE family. In terms of assembly, interacts with KCNB1. Associates with KCNH2/ERG1. May associate with KCNQ2 and KCNQ3. Associates with HCN1 and probably HCN2. Heteromultimer with KCNC2. Interacts with KCNC2. Interacts with KCNQ1; forms a heterooligomer complex that targets to the membrane raft and leading to currents with an apparently instantaneous activation, a rapid deactivation process and a linear current-voltage relationship and decreases the amplitude of the outward current.

The protein localises to the cell membrane. Its subcellular location is the apical cell membrane. Functionally, ancillary protein that functions as a regulatory subunit of the voltage-gated potassium (Kv) channel complex composed of pore-forming and potassium-conducting alpha subunits and of regulatory beta subunits. KCNE2 beta subunit modulates the gating kinetics and enhances stability of the channel complex. Alters the gating of the delayed rectifier Kv channel containing KCNB1 alpha subunit. Associates with KCNH2/HERG alpha subunit Kv channel to form the rapidly activating component of the delayed rectifying potassium current (IKr) in heart. May associate with KCNQ2 and/or KCNQ3 alpha subunits to modulate the native M-type current. May associate with HCN1 and HCN2 channel subunits to increase potassium current. Forms a heterooligomer complex with KCNQ1/KVLQT1 alpha subunits which leads to currents with an apparently instantaneous activation, a rapid deactivation process and a linear current-voltage relationship and decreases the amplitude of the outward current. KCNQ1-KCNE2 channel associates with Na(+)-coupled myo-inositol symporter in the apical membrane of choroid plexus epithelium and regulates the myo-inositol gradient between blood and cerebrospinal fluid with an impact on neuron excitability. The polypeptide is Potassium voltage-gated channel subfamily E member 2 (Kcne2) (Cavia porcellus (Guinea pig)).